A 513-amino-acid polypeptide reads, in one-letter code: Protein STB3 (513 aa).

Disordered stretches follow at residues 1–20, 134–159, and 227–249; these read MSEN…KSEA, KDLI…KVEM, and YQNK…PYSF. Residues 134 to 143 are compositionally biased toward basic and acidic residues; sequence KDLISQESQR. Residues 230–244 are compositionally biased toward low complexity; it reads KSRNSSNNFGKSSNG. A Phosphoserine modification is found at Ser254. 3 disordered regions span residues 282–354, 373–437, and 450–513; these read RRRS…KESS, NSKA…EDWE, and APNI…SLKS. Polar residues predominate over residues 296 to 306; sequence KLNTHQDSSYL. Residues 307–324 are compositionally biased toward low complexity; sequence SPNTTSTTTPSNNNSNSN. Polar residues-rich tracts occupy residues 373–396, 409–418, 450–463, and 470–479; these read NSKA…SNPI, QHLNGESSPQ, APNI…TNGV, and NPSFTNSQNG. The span at 488–500 shows a compositional bias: basic and acidic residues; that stretch reads DQQKHEQQPRNGE.

This sequence belongs to the STB3 family. As to quaternary structure, interacts with SIN3.

The protein localises to the cytoplasm. The polypeptide is Protein STB3 (STB3) (Saccharomyces cerevisiae (strain ATCC 204508 / S288c) (Baker's yeast)).